The chain runs to 443 residues: Cobyrinate a,c-diamide synthase (443 aa).

The 186-residue stretch at 248–433 folds into the GATase cobBQ-type domain; sequence KIAVAYDKAF…LHNHAVANPY (186 aa). The active-site Nucleophile is Cys327.

Belongs to the CobB/CbiA family. Mg(2+) is required as a cofactor.

It carries out the reaction cob(II)yrinate + 2 L-glutamine + 2 ATP + 2 H2O = cob(II)yrinate a,c diamide + 2 L-glutamate + 2 ADP + 2 phosphate + 2 H(+). The catalysed reaction is Ni-sirohydrochlorin + 2 L-glutamine + 2 ATP + 2 H2O = Ni-sirohydrochlorin a,c-diamide + 2 L-glutamate + 2 ADP + 2 phosphate + 2 H(+). The protein operates within cofactor biosynthesis; adenosylcobalamin biosynthesis; cob(II)yrinate a,c-diamide from sirohydrochlorin (anaerobic route): step 10/10. Functionally, catalyzes the ATP-dependent amidation of the two carboxylate groups at positions a and c of cobyrinate, using either L-glutamine or ammonia as the nitrogen source. Involved in the biosynthesis of the unique nickel-containing tetrapyrrole coenzyme F430, the prosthetic group of methyl-coenzyme M reductase (MCR), which plays a key role in methanogenesis and anaerobic methane oxidation. Catalyzes the ATP-dependent amidation of the two carboxylate groups at positions a and c of Ni-sirohydrochlorin, using L-glutamine or ammonia as the nitrogen source. This is Cobyrinate a,c-diamide synthase from Methanocaldococcus jannaschii (strain ATCC 43067 / DSM 2661 / JAL-1 / JCM 10045 / NBRC 100440) (Methanococcus jannaschii).